The chain runs to 152 residues: MTSTLNTLKSNLGSRKKKLRKGRGIAAGQGASCGFGMRGQKSRSGRPTRPGFEGGQMPLYRRVPKLKHFEIINQKNYSIVNLSKLSEFKDNEIVNIDSLVKKKLLFKPKFPLKILGNGVVKVKLKVQAHAFTKVAQEKIESAGGSCEVLNNK.

Residues 1 to 56 form a disordered region; it reads MTSTLNTLKSNLGSRKKKLRKGRGIAAGQGASCGFGMRGQKSRSGRPTRPGFEGGQ. Over residues 14–23 the composition is skewed to basic residues; that stretch reads SRKKKLRKGR. The span at 25-37 shows a compositional bias: gly residues; that stretch reads IAAGQGASCGFGM.

Belongs to the universal ribosomal protein uL15 family. Part of the 50S ribosomal subunit.

Binds to the 23S rRNA. The polypeptide is Large ribosomal subunit protein uL15 (Prochlorococcus marinus (strain MIT 9515)).